A 284-amino-acid polypeptide reads, in one-letter code: Bifunctional protein FolD (284 aa).

Residues 165–167 (GRS), Ser-190, and Ile-231 each bind NADP(+).

It belongs to the tetrahydrofolate dehydrogenase/cyclohydrolase family. In terms of assembly, homodimer.

The enzyme catalyses (6R)-5,10-methylene-5,6,7,8-tetrahydrofolate + NADP(+) = (6R)-5,10-methenyltetrahydrofolate + NADPH. The catalysed reaction is (6R)-5,10-methenyltetrahydrofolate + H2O = (6R)-10-formyltetrahydrofolate + H(+). It participates in one-carbon metabolism; tetrahydrofolate interconversion. Functionally, catalyzes the oxidation of 5,10-methylenetetrahydrofolate to 5,10-methenyltetrahydrofolate and then the hydrolysis of 5,10-methenyltetrahydrofolate to 10-formyltetrahydrofolate. This chain is Bifunctional protein FolD, found in Streptococcus thermophilus (strain ATCC BAA-491 / LMD-9).